A 1871-amino-acid chain; its full sequence is Protein RRP5 homolog (1871 aa).

A disordered region spans residues 1–62 (MANLEESFPR…KTKKLKIEKR (62 aa)). An N-acetylalanine modification is found at A2. Residue S7 is modified to Phosphoserine. Residues 43–59 (KRKKSQKGPAKTKKLKI) are compositionally biased toward basic residues. 4 S1 motif domains span residues 83–171 (GMRI…LSLN), 187–258 (GMLL…LSVG), 281–346 (GLVV…LSLR), and 365–436 (GAVL…LSLR). Phosphoserine is present on S438. S1 motif domains follow at residues 453 to 522 (GAVV…MTLK), 542 to 611 (GLQT…LSFK), 636 to 707 (GQLV…LCRK), and 729 to 798 (GMLL…LSLR). The disordered stretch occupies residues 998–1018 (AAKRTMRPTQKDSETVDEDEE). K1030 is covalently cross-linked (Glycyl lysine isopeptide (Lys-Gly) (interchain with G-Cter in SUMO1)). 4 consecutive S1 motif domains span residues 1036-1109 (GDMV…ISHP), 1149-1222 (GQTV…LSLT), 1230-1298 (GEVA…LSLR), and 1324-1396 (GQLL…LSFL). Residues S1360 and S1362 each carry the phosphoserine modification. Disordered stretches follow at residues 1395-1531 (FLPG…APRL) and 1549-1586 (ALPPLAESSDSEEDEKPHQATIKKSKKERELEKQKAEK). K1416 is covalently cross-linked (Glycyl lysine isopeptide (Lys-Gly) (interchain with G-Cter in SUMO2)). Composition is skewed to basic and acidic residues over residues 1416-1459 (KQEE…EKQQ) and 1469-1484 (GGRECRESGSEQERVS). S1476, S1493, and S1498 each carry phosphoserine. Residues 1575 to 1586 (KERELEKQKAEK) are compositionally biased toward basic and acidic residues. HAT repeat units lie at residues 1599-1631 (GRQPESADDFDRLVLSSPNSSILWLQYMAFHLQ), 1705-1737 (EKFQEAGELYNRMLKRFRQEKAVWIKYGAFLLR), 1775-1807 (GDAERAKAIFENTLSTYPKRTDVWSVYIDMTIK), and 1809-1844 (GSQKDVRDIFERVIHLSLAPKRMKFFFKRYLDYEKQ).

As to quaternary structure, interacts with NF-kappa-B p50/NFKB1 and NF-kappa-B p65/RELA.

It localises to the nucleus. It is found in the nucleolus. Its function is as follows. Essential for the generation of mature 18S rRNA, specifically necessary for cleavages at sites A0, 1 and 2 of the 47S precursor. Directly interacts with U3 snoRNA. Functionally, involved in the biogenesis of rRNA. In Homo sapiens (Human), this protein is Protein RRP5 homolog (PDCD11).